Here is a 67-residue protein sequence, read N- to C-terminus: Ayadualin (67 aa).

Positions 1 to 20 are cleaved as a signal peptide; that stretch reads MNKIILFSAVFLALVFCAEA. Residues 35–54 are compositionally biased toward acidic residues; that stretch reads PDDTVDIDEGLPDAFDEDYE. The tract at residues 35–67 is disordered; the sequence is PDDTVDIDEGLPDAFDEDYEQDGHNPYPCRGDC. The Integrin-binding motif motif lies at 64-66; sequence RGD.

Salivary gland.

The protein resides in the secreted. In terms of biological role, inhibits collagen- and ADP-induced host platelet aggregation by blocking the binding of host integrin alpha-IIb/beta-3 (ITGA2B/ITGB3) to fibrinogen. Inhibits the intrinsic blood coagulation pathway in the host by blocking the activity of host coagulation factor XIIa (F12). This chain is Ayadualin, found in Lutzomyia ayacuchensis (Sand fly).